A 465-amino-acid chain; its full sequence is Flavin-containing monooxygenase FMO GS-OX-like 2 (465 aa).

18-23 (GAGAAG) lines the FAD pocket. 217-222 (GSSASG) is an NADP(+) binding site.

This sequence belongs to the FMO family. FAD serves as cofactor.

Functionally, catalyzes the conversion of methylthioalkyl glucosinolates of any chain length into methylsulfinylalkyl glucosinolates. The chain is Flavin-containing monooxygenase FMO GS-OX-like 2 from Arabidopsis thaliana (Mouse-ear cress).